The sequence spans 295 residues: bZIP transcription factor 60 (295 aa).

The disordered stretch occupies residues Pro-101–Ala-154. Over residues Asp-106–Ile-127 the composition is skewed to basic and acidic residues. A compositionally biased stretch (acidic residues) spans His-128–Asp-138. Positions Val-140 to Gly-203 constitute a bZIP domain. The segment at Lys-142–Lys-162 is basic motif. The tract at residues Leu-168–Leu-182 is leucine-zipper. The helical transmembrane segment at Leu-224–Met-244 threads the bilayer.

It belongs to the bZIP family. Interacts with BZIP28. In terms of tissue distribution, expressed in seedlings, rosette and cauline leaves, stems, buds, flowers, siliques, immature seeds, anthers and pollen grains.

The protein localises to the endoplasmic reticulum membrane. The protein resides in the nucleus. In terms of biological role, transcription factor involved in the unfolded protein response (UPR). Acts during endoplasmic reticulum stress (ER) by activating unfolded protein response (UPR) target genes via direct binding to the UPR element (UPRE). Plays a role in plant immunity and abiotic stress responses. The chain is bZIP transcription factor 60 from Arabidopsis thaliana (Mouse-ear cress).